The primary structure comprises 383 residues: Sulfate adenylyltransferase (383 aa).

Belongs to the sulfate adenylyltransferase family.

The enzyme catalyses sulfate + ATP + H(+) = adenosine 5'-phosphosulfate + diphosphate. Its pathway is sulfur metabolism; hydrogen sulfide biosynthesis; sulfite from sulfate: step 1/3. The chain is Sulfate adenylyltransferase from Halothermothrix orenii (strain H 168 / OCM 544 / DSM 9562).